Reading from the N-terminus, the 97-residue chain is Osteocalcin (97 aa).

The signal sequence occupies residues 1–18 (MKTLAILVLCSLAAICLT). Residues 19–52 (SSASAGAQPAGDSPVQGGLFMEKDQASAVVRQTR) constitute a propeptide that is removed on maturation. A Gla domain is found at 53-93 (AAKELTLAQTESLREVCETNMACDEMADAQGIVAAYQAFYG). Positions 63, 67, 70, and 76 each coordinate Ca(2+). 4-carboxyglutamate occurs at positions 63, 67, and 70. C69 and C75 are oxidised to a cystine. E77 is modified (4-carboxyglutamate).

Belongs to the osteocalcin/matrix Gla protein family. Gamma-carboxyglutamate residues are formed by vitamin K dependent carboxylation by GGCX. These residues are essential for the binding of calcium. In the branchial arches, BGP is found outside the chondrocyte-containing zone. It is found in some cells in the basal zone of the branchial filaments, near the branchial arches, and within the extracellular matrix in the medial zone. In the vertebra, BGP is found in the mineralized bone matrix.

Its subcellular location is the secreted. Its function is as follows. The carboxylated form is one of the main organic components of the bone matrix, which constitutes 1-2% of the total bone protein. The carboxylated form binds strongly to apatite and calcium. This Argyrosomus regius (Meagre) protein is Osteocalcin (bglap).